The following is a 217-amino-acid chain: Probable ribonuclease P protein subunit 1 (217 aa).

Belongs to the eukaryotic/archaeal RNase P protein component 1 family.

The protein resides in the nucleus. It localises to the nucleolus. It carries out the reaction Endonucleolytic cleavage of RNA, removing 5'-extranucleotides from tRNA precursor.. Part of ribonuclease P, a protein complex that generates mature tRNA molecules by cleaving their 5'-ends. The chain is Probable ribonuclease P protein subunit 1 from Schizosaccharomyces pombe (strain 972 / ATCC 24843) (Fission yeast).